A 188-amino-acid chain; its full sequence is Peptide deformylase (188 aa).

Fe cation is bound by residues Cys94 and His136. Residue Glu137 is part of the active site. Residue His140 coordinates Fe cation.

This sequence belongs to the polypeptide deformylase family. The cofactor is Fe(2+).

The enzyme catalyses N-terminal N-formyl-L-methionyl-[peptide] + H2O = N-terminal L-methionyl-[peptide] + formate. In terms of biological role, removes the formyl group from the N-terminal Met of newly synthesized proteins. Requires at least a dipeptide for an efficient rate of reaction. N-terminal L-methionine is a prerequisite for activity but the enzyme has broad specificity at other positions. In Chlorobium phaeobacteroides (strain DSM 266 / SMG 266 / 2430), this protein is Peptide deformylase.